Reading from the N-terminus, the 633-residue chain is Pollen receptor-like kinase 3 (633 aa).

An N-terminal signal peptide occupies residues 1-19; sequence MTAVLFLCFLLICFSFTPS. N-linked (GlcNAc...) asparagine glycosylation is found at Asn22 and Asn37. A disulfide bond links Cys53 and Cys62. LRR repeat units follow at residues 90-115, 117-137, 138-162, 163-186, and 188-210; these read LPNLRTIRLDNNLLSGPLPPFFKLPG, KSLLLSNNSFSGEIADDFFKE, TPQLKRVFLDNNRLSGKIPASLMQL, AGLEELHMQGNQFTGEIPPLTDGN, and VLKSLDLSNNDLEGEIPITISDR. A glycan (N-linked (GlcNAc...) asparagine) is linked at Asn123. Cysteines 224 and 232 form a disulfide. The N-linked (GlcNAc...) asparagine glycan is linked to Asn246. The helical transmembrane segment at 249–269 threads the bilayer; that stretch reads AKAIFMVILFLLIFLFVVAII. Residues 294-314 are compositionally biased toward basic and acidic residues; sequence VEVRVPDSIKKPIDSSKKRSN. Residues 294-339 are disordered; the sequence is VEVRVPDSIKKPIDSSKKRSNAEGSSKKGSSHNGKGAGGGPGSGMG. The span at 328 to 338 shows a compositional bias: gly residues; sequence KGAGGGPGSGM. Positions 358–633 constitute a Protein kinase domain; sequence KAAAEVLGNG…IVRRIERVTL (276 aa). ATP is bound by residues 364-372 and Lys386; that span reads LGNGSLGSA. Ser438 carries the phosphoserine modification. At Thr458 the chain carries Phosphothreonine. A Phosphoserine modification is found at Ser535.

It belongs to the protein kinase superfamily. Ser/Thr protein kinase family. In terms of assembly, interacts in vitro with ROPGEF1 (via PRONE domain). Interacts with PRK6. In terms of tissue distribution, expressed in pollen and/or in flowers, but not in leaves.

Its subcellular location is the membrane. It carries out the reaction L-seryl-[protein] + ATP = O-phospho-L-seryl-[protein] + ADP + H(+). It catalyses the reaction L-threonyl-[protein] + ATP = O-phospho-L-threonyl-[protein] + ADP + H(+). The phosphorylation activity is calcium-independent. Receptor-like kinase involved in the control of pollen germination and pollen tube polar growth. Can phosphorylate ROPGEF1 in vitro. The chain is Pollen receptor-like kinase 3 from Arabidopsis thaliana (Mouse-ear cress).